We begin with the raw amino-acid sequence, 247 residues long: Large ribosomal subunit protein uL30z (247 aa).

It belongs to the universal ribosomal protein uL30 family.

This is Large ribosomal subunit protein uL30z (RPL7A) from Arabidopsis thaliana (Mouse-ear cress).